The sequence spans 422 residues: Glycerol-3-phosphate dehydrogenase [NAD(+)] 2 (422 aa).

NAD(+) contacts are provided by residues 69-74 (GSGNWG), F157, K180, and A213. K180 contributes to the substrate binding site. K273 acts as the Proton acceptor in catalysis. NAD(+) is bound by residues R338 and Q367. 338–339 (RN) lines the substrate pocket.

It belongs to the NAD-dependent glycerol-3-phosphate dehydrogenase family.

The catalysed reaction is sn-glycerol 3-phosphate + NAD(+) = dihydroxyacetone phosphate + NADH + H(+). This chain is Glycerol-3-phosphate dehydrogenase [NAD(+)] 2 (GPD2), found in Candida glabrata (strain ATCC 2001 / BCRC 20586 / JCM 3761 / NBRC 0622 / NRRL Y-65 / CBS 138) (Yeast).